The sequence spans 461 residues: Zinc transporter 6 (461 aa).

At 1–33 the chain is on the cytoplasmic side; the sequence is MGTIHLFRKPQRSFFGKLLREFRLVAADRRSWK. The chain crosses the membrane as a helical span at residues 34 to 54; sequence ILLFGVINLICTGFLLMWCSS. Residues 55 to 64 lie on the Extracellular side of the membrane; it reads TNSIALTAYT. The chain crosses the membrane as a helical span at residues 65-85; that stretch reads YLTIFDLFSLMTCLISYWVTL. Topologically, residues 86–98 are cytoplasmic; that stretch reads RKPSPVYSFGFER. A helical transmembrane segment spans residues 99 to 119; the sequence is LEVLAVFASTVLAQLGALFIL. The Extracellular segment spans residues 120–134; the sequence is KESAERFLEQPEIHT. A helical transmembrane segment spans residues 135–155; the sequence is GRLLVGTFVALCFNLFTMLSI. The Cytoplasmic portion of the chain corresponds to 156–200; that stretch reads RNKPFAYVSEAASTSWLQEHVADLSRSLCGIIPGLSSIFLPRMNP. The chain crosses the membrane as a helical span at residues 201 to 221; sequence FVLIDLAGAFALCITYMLIEI. At 222-223 the chain is on the extracellular side; it reads NN. Residues 224–244 traverse the membrane as a helical segment; sequence YFAVDTASAIAIALMTFGTMY. Residues 245 to 461 lie on the Cytoplasmic side of the membrane; the sequence is PMSVYSGKVL…TNNRIGQPRP (217 aa). A disordered region spans residues 371–392; it reads NPVTSTPAKPSSPPPEFSFNTP.

The protein belongs to the cation diffusion facilitator (CDF) transporter (TC 2.A.4) family. SLC30A subfamily. In terms of assembly, heterodimer with SLC30A5; form a functional zinc ion transmembrane transporter. Expressed in brain; especially in cerebellum, hippocampus, parahippocampal gyrus, superior and middle temporal gyrus. Also expressed in B-cells, colon, eye, and lung. Lower expression was present in bone, brain, cervix, ear, heart, kidney, muscle, nerve, pancreas, prostate, skin, stomach, and testis.

It localises to the golgi apparatus. Its subcellular location is the trans-Golgi network membrane. In terms of biological role, has probably no intrinsic transporter activity but together with SLC30A5 forms a functional zinc ion:proton antiporter heterodimer, mediating zinc entry into the lumen of organelles along the secretory pathway. As part of that zinc ion:proton antiporter, contributes to zinc ion homeostasis within the early secretory pathway and regulates the activation and folding of enzymes like alkaline phosphatases and enzymes involved in phosphatidylinositol glycan anchor biosynthesis. The chain is Zinc transporter 6 from Homo sapiens (Human).